The sequence spans 556 residues: Formate--tetrahydrofolate ligase (556 aa).

Residue 65 to 72 coordinates ATP; it reads TPAGEGKS.

This sequence belongs to the formate--tetrahydrofolate ligase family.

The enzyme catalyses (6S)-5,6,7,8-tetrahydrofolate + formate + ATP = (6R)-10-formyltetrahydrofolate + ADP + phosphate. Its pathway is one-carbon metabolism; tetrahydrofolate interconversion. In Streptococcus thermophilus (strain CNRZ 1066), this protein is Formate--tetrahydrofolate ligase.